Consider the following 473-residue polypeptide: Bifunctional protein HldE (473 aa).

The segment at 1-317 (MKLSMPRFDQ…RRAVQREQGS (317 aa)) is ribokinase. Residue 194-197 (NLSE) coordinates ATP. Aspartate 263 is a catalytic residue. The interval 343 to 473 (FTNGCFDILH…TAIVEKIRQR (131 aa)) is cytidylyltransferase.

It in the N-terminal section; belongs to the carbohydrate kinase PfkB family. The protein in the C-terminal section; belongs to the cytidylyltransferase family. In terms of assembly, homodimer.

It catalyses the reaction D-glycero-beta-D-manno-heptose 7-phosphate + ATP = D-glycero-beta-D-manno-heptose 1,7-bisphosphate + ADP + H(+). It carries out the reaction D-glycero-beta-D-manno-heptose 1-phosphate + ATP + H(+) = ADP-D-glycero-beta-D-manno-heptose + diphosphate. It participates in nucleotide-sugar biosynthesis; ADP-L-glycero-beta-D-manno-heptose biosynthesis; ADP-L-glycero-beta-D-manno-heptose from D-glycero-beta-D-manno-heptose 7-phosphate: step 1/4. The protein operates within nucleotide-sugar biosynthesis; ADP-L-glycero-beta-D-manno-heptose biosynthesis; ADP-L-glycero-beta-D-manno-heptose from D-glycero-beta-D-manno-heptose 7-phosphate: step 3/4. Catalyzes the phosphorylation of D-glycero-D-manno-heptose 7-phosphate at the C-1 position to selectively form D-glycero-beta-D-manno-heptose-1,7-bisphosphate. Functionally, catalyzes the ADP transfer from ATP to D-glycero-beta-D-manno-heptose 1-phosphate, yielding ADP-D-glycero-beta-D-manno-heptose. This is Bifunctional protein HldE from Pseudomonas aeruginosa (strain LESB58).